The primary structure comprises 398 residues: CCA-adding enzyme (398 aa).

ATP is bound by residues Gly-32 and Arg-35. Gly-32 and Arg-35 together coordinate CTP. The Mg(2+) site is built by Asp-45 and Asp-47. 5 residues coordinate ATP: Arg-119, Asp-162, Arg-165, Arg-168, and Arg-171. CTP contacts are provided by Arg-119, Asp-162, Arg-165, Arg-168, and Arg-171.

The protein belongs to the tRNA nucleotidyltransferase/poly(A) polymerase family. Bacterial CCA-adding enzyme type 3 subfamily. In terms of assembly, homodimer. Requires Mg(2+) as cofactor.

The catalysed reaction is a tRNA precursor + 2 CTP + ATP = a tRNA with a 3' CCA end + 3 diphosphate. It catalyses the reaction a tRNA with a 3' CCA end + 2 CTP + ATP = a tRNA with a 3' CCACCA end + 3 diphosphate. Catalyzes the addition and repair of the essential 3'-terminal CCA sequence in tRNAs without using a nucleic acid template. Adds these three nucleotides in the order of C, C, and A to the tRNA nucleotide-73, using CTP and ATP as substrates and producing inorganic pyrophosphate. tRNA 3'-terminal CCA addition is required both for tRNA processing and repair. Also involved in tRNA surveillance by mediating tandem CCA addition to generate a CCACCA at the 3' terminus of unstable tRNAs. While stable tRNAs receive only 3'-terminal CCA, unstable tRNAs are marked with CCACCA and rapidly degraded. In Lactococcus lactis subsp. lactis (strain IL1403) (Streptococcus lactis), this protein is CCA-adding enzyme.